The chain runs to 302 residues: Putative 2-dehydro-3-deoxy-D-gluconate aldolase YagE (302 aa).

Residues Ser-49 and Tyr-112 each act as charge relay system in the active site. Tyr-138 (proton donor) is an active-site residue. The Schiff-base intermediate with substrate role is filled by Lys-167.

It belongs to the DapA family. In terms of assembly, a dimer of dimers.

The protein resides in the cytoplasm. It carries out the reaction 2-dehydro-3-deoxy-D-gluconate = D-glyceraldehyde + pyruvate. It catalyses the reaction 2-dehydro-3-deoxy-D-arabinonate = glycolaldehyde + pyruvate. Functionally, catalyzes the formation of 2-keto-3-deoxy-gluconate (KDG) from pyruvate and glyceraldehyde. May also function as a 2-dehydro-3-deoxy-D-pentonate aldolase. Overexpression leads to increased growth (over 2 hours) in the presence of the antibiotics norfloxacin, ampicillin and streptomycin. The sequence is that of Putative 2-dehydro-3-deoxy-D-gluconate aldolase YagE (yagE) from Escherichia coli (strain K12).